Here is a 219-residue protein sequence, read N- to C-terminus: N-(5'-phosphoribosyl)anthranilate isomerase (219 aa).

This sequence belongs to the TrpF family.

The catalysed reaction is N-(5-phospho-beta-D-ribosyl)anthranilate = 1-(2-carboxyphenylamino)-1-deoxy-D-ribulose 5-phosphate. It participates in amino-acid biosynthesis; L-tryptophan biosynthesis; L-tryptophan from chorismate: step 3/5. This is N-(5'-phosphoribosyl)anthranilate isomerase from Bradyrhizobium sp. (strain BTAi1 / ATCC BAA-1182).